We begin with the raw amino-acid sequence, 244 residues long: Triosephosphate isomerase (244 aa).

Residue 8 to 10 participates in substrate binding; that stretch reads NWK. Catalysis depends on H93, which acts as the Electrophile. E161 (proton acceptor) is an active-site residue. Substrate is bound by residues G167, S206, and 227-228; that span reads GG.

It belongs to the triosephosphate isomerase family. In terms of assembly, homodimer.

It is found in the cytoplasm. It catalyses the reaction D-glyceraldehyde 3-phosphate = dihydroxyacetone phosphate. The protein operates within carbohydrate biosynthesis; gluconeogenesis. Its pathway is carbohydrate degradation; glycolysis; D-glyceraldehyde 3-phosphate from glycerone phosphate: step 1/1. In terms of biological role, involved in the gluconeogenesis. Catalyzes stereospecifically the conversion of dihydroxyacetone phosphate (DHAP) to D-glyceraldehyde-3-phosphate (G3P). In Deinococcus radiodurans (strain ATCC 13939 / DSM 20539 / JCM 16871 / CCUG 27074 / LMG 4051 / NBRC 15346 / NCIMB 9279 / VKM B-1422 / R1), this protein is Triosephosphate isomerase.